The sequence spans 453 residues: Zinc finger protein Pegasus (453 aa).

3 consecutive C2H2-type zinc fingers follow at residues 101-123 (LKCR…IRIH), 129-151 (HRCH…MRSH), and 157-180 (YKCE…RRKH). The span at 279-293 (GQLSSLPPDTQNPAS) shows a compositional bias: polar residues. Positions 279-375 (GQLSSLPPDT…QPSTPAPALP (97 aa)) are disordered. Positions 315–332 (CSSAVSTSVAQSSSPASP) are enriched in low complexity. Positions 356–368 (RTSTPSISNSQPS) are enriched in polar residues. 2 C2H2-type zinc fingers span residues 383–405 (HHCQ…MGCH) and 411–438 (FQCN…CCQH).

The protein belongs to the Ikaros C2H2-type zinc-finger protein family. Probably self-associates.

It is found in the nucleus. Transcriptional repressor that binds the core 5'GNNTGTNG-3' DNA consensus sequence. This Xenopus laevis (African clawed frog) protein is Zinc finger protein Pegasus (ikzf5).